The following is a 434-amino-acid chain: Methylenetetrahydrofolate--tRNA-(uracil-5-)-methyltransferase TrmFO (434 aa).

Residue 9-14 (GGGLAG) coordinates FAD.

The protein belongs to the MnmG family. TrmFO subfamily. Requires FAD as cofactor.

It localises to the cytoplasm. The enzyme catalyses uridine(54) in tRNA + (6R)-5,10-methylene-5,6,7,8-tetrahydrofolate + NADH + H(+) = 5-methyluridine(54) in tRNA + (6S)-5,6,7,8-tetrahydrofolate + NAD(+). The catalysed reaction is uridine(54) in tRNA + (6R)-5,10-methylene-5,6,7,8-tetrahydrofolate + NADPH + H(+) = 5-methyluridine(54) in tRNA + (6S)-5,6,7,8-tetrahydrofolate + NADP(+). Functionally, catalyzes the folate-dependent formation of 5-methyl-uridine at position 54 (M-5-U54) in all tRNAs. The sequence is that of Methylenetetrahydrofolate--tRNA-(uracil-5-)-methyltransferase TrmFO from Geobacter sulfurreducens (strain ATCC 51573 / DSM 12127 / PCA).